The chain runs to 414 residues: 2,3-diketo-5-methylthiopentyl-1-phosphate enolase (414 aa).

The Proton acceptor role is filled by Lys99. Substrate contacts are provided by residues Lys148, 174-177 (KDDE), His265, Gly338, and 360-361 (GG). Lys174, Asp176, and Glu177 together coordinate Mg(2+). Lys174 is modified (N6-carboxylysine).

It belongs to the RuBisCO large chain family. Type IV subfamily. Homodimer. Requires Mg(2+) as cofactor.

The catalysed reaction is 5-methylsulfanyl-2,3-dioxopentyl phosphate = 2-hydroxy-5-methylsulfanyl-3-oxopent-1-enyl phosphate. It participates in amino-acid biosynthesis; L-methionine biosynthesis via salvage pathway; L-methionine from S-methyl-5-thio-alpha-D-ribose 1-phosphate: step 3/6. In terms of biological role, catalyzes the enolization of 2,3-diketo-5-methylthiopentyl-1-phosphate (DK-MTP-1-P) into 2-hydroxy-3-keto-5-methylthiopentenyl-1-phosphate (HK-MTPenyl-1-P). The polypeptide is 2,3-diketo-5-methylthiopentyl-1-phosphate enolase (Bacillus cereus (strain AH820)).